The primary structure comprises 100 residues: Putative protein adenylyltransferase MJ1379 (100 aa).

A GSX(10)DXD motif motif is present at residues 31–45; sequence GSYARGEQTEESDID. Asp-43, Asp-45, and Asp-77 together coordinate Mg(2+).

This sequence belongs to the MntA antitoxin family. As to quaternary structure, probably forms a complex with cognate toxin MJ1380. Mg(2+) is required as a cofactor.

The catalysed reaction is L-tyrosyl-[protein] + ATP = O-(5'-adenylyl)-L-tyrosyl-[protein] + diphosphate. It carries out the reaction O-(5'-adenylyl)-L-tyrosyl-[protein] + ATP = O-[5'-(adenylyl-(5'-&gt;3')-adenylyl)]-L-tyrosyl-[protein] + diphosphate. Probable antitoxin component of a putative type VII toxin-antitoxin (TA) system. Neutralizes cognate toxic MJ1380 by di-AMPylation. The chain is Putative protein adenylyltransferase MJ1379 from Methanocaldococcus jannaschii (strain ATCC 43067 / DSM 2661 / JAL-1 / JCM 10045 / NBRC 100440) (Methanococcus jannaschii).